Consider the following 158-residue polypeptide: Methylated-DNA--protein-cysteine methyltransferase (158 aa).

The active-site Nucleophile; methyl group acceptor is the Cys-126.

Belongs to the MGMT family.

The protein localises to the cytoplasm. The enzyme catalyses a 6-O-methyl-2'-deoxyguanosine in DNA + L-cysteinyl-[protein] = S-methyl-L-cysteinyl-[protein] + a 2'-deoxyguanosine in DNA. It carries out the reaction a 4-O-methyl-thymidine in DNA + L-cysteinyl-[protein] = a thymidine in DNA + S-methyl-L-cysteinyl-[protein]. Involved in the cellular defense against the biological effects of O6-methylguanine (O6-MeG) and O4-methylthymine (O4-MeT) in DNA. Repairs the methylated nucleobase in DNA by stoichiometrically transferring the methyl group to a cysteine residue in the enzyme. This is a suicide reaction: the enzyme is irreversibly inactivated. This Methanosarcina mazei (strain ATCC BAA-159 / DSM 3647 / Goe1 / Go1 / JCM 11833 / OCM 88) (Methanosarcina frisia) protein is Methylated-DNA--protein-cysteine methyltransferase.